Here is a 134-residue protein sequence, read N- to C-terminus: Putative nickel-responsive regulator (134 aa).

Residues His-78, His-89, His-91, and Cys-97 each coordinate Ni(2+).

Belongs to the transcriptional regulatory CopG/NikR family. Requires Ni(2+) as cofactor.

Transcriptional regulator. This chain is Putative nickel-responsive regulator, found in Chlorobaculum parvum (strain DSM 263 / NCIMB 8327) (Chlorobium vibrioforme subsp. thiosulfatophilum).